Reading from the N-terminus, the 267-residue chain is Chlorophyll a-b binding protein 3A, chloroplastic (267 aa).

The transit peptide at 1–34 directs the protein to the chloroplast; sequence MAASTMALSSSTFAGKTVKLAPSSSEITGNGRIT. The helical transmembrane segment at 153–173 threads the bilayer; it reads LVHAQSILAIWACQVVLMGAV. Chlorophyll b is bound by residues Val-154, Ser-158, Gln-166, Glu-174, Arg-177, and Leu-183. Chlorophyll a is bound by residues Lys-214, Glu-215, Asn-218, Arg-220, Gln-232, His-247, and Ala-256. Residues 221-241 traverse the membrane as a helical segment; that stretch reads LAMFSMFGFFVQAIVTGKGPL. Phe-263 lines the chlorophyll b pocket.

It belongs to the light-harvesting chlorophyll a/b-binding (LHC) protein family. The LHC complex consists of chlorophyll a-b binding proteins. Binds at least 14 chlorophylls (8 Chl-a and 6 Chl-b) and carotenoids such as lutein and neoxanthin. is required as a cofactor. In terms of processing, photoregulated by reversible phosphorylation of its threonine residues.

It localises to the plastid. The protein resides in the chloroplast thylakoid membrane. Functionally, the light-harvesting complex (LHC) functions as a light receptor, it captures and delivers excitation energy to photosystems with which it is closely associated. This is Chlorophyll a-b binding protein 3A, chloroplastic (CAB3A) from Solanum lycopersicum (Tomato).